The primary structure comprises 377 residues: UDP-N,N'-diacetylbacillosamine 2-epimerase (hydrolyzing) (377 aa).

It belongs to the UDP-N-acetylglucosamine 2-epimerase family.

It carries out the reaction UDP-N,N'-diacetylbacillosamine + H2O = 2,4-diacetamido-2,4,6-trideoxy-alpha-D-mannopyranose + UDP + H(+). Its function is as follows. Involved in biosynthesis of legionaminic acid (5,7-diamino-3,5,7,9-tetradeoxy-D-glycero-D-galacto-non-2-ulosonic acid)(Leg), a sialic acid-like derivative that is incorporated into virulence-associated cell surface glycoconjugates such as lipopolysaccharide (LPS) which could be a key determinant in the ability of L.pneumophila to inhibit the fusion of phagosomes with lysosomes. LPS contains a majority alpha2,4-linked homomer of legionaminic acid. Catalyzes the conversion of UDP-N,N'-diacetylbacillosamine (Bac2Ac4Ac) into 2,4-diacetamido-2,4,6-trideoxymannose and UDP. The polypeptide is UDP-N,N'-diacetylbacillosamine 2-epimerase (hydrolyzing) (Legionella pneumophila subsp. pneumophila (strain Philadelphia 1 / ATCC 33152 / DSM 7513)).